A 453-amino-acid polypeptide reads, in one-letter code: Tubulin alpha-13 chain (453 aa).

Residue Gln11 participates in GTP binding. At Lys40 the chain carries N6-acetyllysine. Residues Glu71, Ser140, Gly144, Thr145, Thr179, Asn206, and Asn228 each contribute to the GTP site. A Mg(2+)-binding site is contributed by Glu71. Residue Glu254 is part of the active site. The tract at residues 429-453 (EKDYEEVGTESQEGDGEEGEDGGDQ) is disordered. A compositionally biased stretch (acidic residues) spans 431 to 453 (DYEEVGTESQEGDGEEGEDGGDQ).

It belongs to the tubulin family. Dimer of alpha and beta chains. A typical microtubule is a hollow water-filled tube with an outer diameter of 25 nm and an inner diameter of 15 nM. Alpha-beta heterodimers associate head-to-tail to form protofilaments running lengthwise along the microtubule wall with the beta-tubulin subunit facing the microtubule plus end conferring a structural polarity. Microtubules usually have 13 protofilaments but different protofilament numbers can be found in some organisms and specialized cells. Mg(2+) serves as cofactor. Acetylation of alpha chains at Lys-40 stabilizes microtubules and affects affinity and processivity of microtubule motors. This modification has a role in multiple cellular functions, ranging from cell motility, cell cycle progression or cell differentiation to intracellular trafficking and signaling.

It is found in the cytoplasm. The protein localises to the cytoskeleton. It carries out the reaction GTP + H2O = GDP + phosphate + H(+). In terms of biological role, tubulin is the major constituent of microtubules, a cylinder consisting of laterally associated linear protofilaments composed of alpha- and beta-tubulin heterodimers. Microtubules grow by the addition of GTP-tubulin dimers to the microtubule end, where a stabilizing cap forms. Below the cap, tubulin dimers are in GDP-bound state, owing to GTPase activity of alpha-tubulin. In Naegleria pringsheimi (Amoeba), this protein is Tubulin alpha-13 chain (TUBA13).